A 303-amino-acid chain; its full sequence is UDP-N-acetylenolpyruvoylglucosamine reductase (303 aa).

The region spanning 29–196 is the FAD-binding PCMH-type domain; that stretch reads KIGGPADILI…LEAVLQLEQK (168 aa). R174 is an active-site residue. The active-site Proton donor is the S225. E295 is a catalytic residue.

The protein belongs to the MurB family. FAD serves as cofactor.

The protein localises to the cytoplasm. It carries out the reaction UDP-N-acetyl-alpha-D-muramate + NADP(+) = UDP-N-acetyl-3-O-(1-carboxyvinyl)-alpha-D-glucosamine + NADPH + H(+). It functions in the pathway cell wall biogenesis; peptidoglycan biosynthesis. Functionally, cell wall formation. In Bacillus velezensis (strain DSM 23117 / BGSC 10A6 / LMG 26770 / FZB42) (Bacillus amyloliquefaciens subsp. plantarum), this protein is UDP-N-acetylenolpyruvoylglucosamine reductase.